A 315-amino-acid polypeptide reads, in one-letter code: Olfactory receptor 4A5 (315 aa).

The Extracellular portion of the chain corresponds to 1–23 (MRQNNNITEFVLLGFSQDPGVQK). Residue Asn-6 is glycosylated (N-linked (GlcNAc...) asparagine). The chain crosses the membrane as a helical span at residues 24-47 (ALFVMFLLTYLVTVVGNLLIVVDI). The Cytoplasmic segment spans residues 48–55 (IASPSLGS). A helical membrane pass occupies residues 56 to 77 (PMYFFLACLSFIDAAYSTTISP). Residues 78–98 (KLIVGLFCDKKTISFQGCMGQ) are Extracellular-facing. Cys-95 and Cys-186 form a disulfide bridge. The chain crosses the membrane as a helical span at residues 99 to 118 (LFIDHFFGGAEVFLLVVMAC). Topologically, residues 119 to 137 (DRYVAICKPLHYLTIMNRQ) are cytoplasmic. The chain crosses the membrane as a helical span at residues 138-156 (VCFLLLVVAMIGGFVHSAF). At 157 to 192 (QIVVYSLPFCGPNVIVHFSCDMHPLLELACTDTYFI) the chain is on the extracellular side. A helical membrane pass occupies residues 193–216 (GLTVVVNSGAICMVIFNLLLISYG). At 217–232 (VILSSLKTYSQEKRGK) the chain is on the cytoplasmic side. A helical transmembrane segment spans residues 233-255 (ALSTCSSGSTVVVLFFVPCIFIY). Residues 256 to 266 (VRPVSNFPTDK) are Extracellular-facing. A helical transmembrane segment spans residues 267–286 (FMTVFYTIITHMLSPLIYTL). Residues 287-315 (RNSEMRNAIEKLLGKKLTIFIIGGVSVLM) are Cytoplasmic-facing.

It belongs to the G-protein coupled receptor 1 family.

It is found in the cell membrane. In terms of biological role, odorant receptor. The chain is Olfactory receptor 4A5 (OR4A5) from Homo sapiens (Human).